Here is a 113-residue protein sequence, read N- to C-terminus: Large ribosomal subunit protein uL24 (113 aa).

Belongs to the universal ribosomal protein uL24 family. As to quaternary structure, part of the 50S ribosomal subunit.

One of two assembly initiator proteins, it binds directly to the 5'-end of the 23S rRNA, where it nucleates assembly of the 50S subunit. Functionally, one of the proteins that surrounds the polypeptide exit tunnel on the outside of the subunit. The sequence is that of Large ribosomal subunit protein uL24 from Synechococcus elongatus (strain ATCC 33912 / PCC 7942 / FACHB-805) (Anacystis nidulans R2).